The sequence spans 209 residues: Uracil phosphoribosyltransferase (209 aa).

Residues arginine 79, arginine 104, and 131 to 139 (DPMLATGGS) each bind 5-phospho-alpha-D-ribose 1-diphosphate. Uracil-binding positions include isoleucine 194 and 199 to 201 (GDA). Aspartate 200 is a 5-phospho-alpha-D-ribose 1-diphosphate binding site.

This sequence belongs to the UPRTase family. It depends on Mg(2+) as a cofactor.

It catalyses the reaction UMP + diphosphate = 5-phospho-alpha-D-ribose 1-diphosphate + uracil. It functions in the pathway pyrimidine metabolism; UMP biosynthesis via salvage pathway; UMP from uracil: step 1/1. Allosterically activated by GTP. Functionally, catalyzes the conversion of uracil and 5-phospho-alpha-D-ribose 1-diphosphate (PRPP) to UMP and diphosphate. The sequence is that of Uracil phosphoribosyltransferase from Brevibacillus brevis (strain 47 / JCM 6285 / NBRC 100599).